Reading from the N-terminus, the 2214-residue chain is Genome polyprotein (2214 aa).

Disordered regions lie at residues methionine 1–glycine 21 and lysine 600–glutamine 619. The N-myristoyl glycine; by host moiety is linked to residue glycine 2. The Cytoplasmic segment spans residues glycine 2–glutamine 1525. 2 amphipathic alpha-helix regions span residues glutamine 580–proline 601 and glycine 581–proline 601. The segment covering threonine 606 to glutamine 619 has biased composition (polar residues). Catalysis depends on for protease 2A activity residues histidine 906 and aspartate 924. The Zn(2+) site is built by cysteine 941 and cysteine 943. The active-site For protease 2A activity is the cysteine 995. Residues cysteine 1001 and histidine 1003 each contribute to the Zn(2+) site. Residues glycine 1133–glutamine 1205 form a membrane-binding region. The segment at glycine 1133 to threonine 1271 is oligomerization. An RNA-binding region spans residues serine 1154 to serine 1158. Residues glutamate 1237–asparagine 1393 form the SF3 helicase domain. Glycine 1261–serine 1268 serves as a coordination point for ATP. Zn(2+) is bound by residues cysteine 1401, cysteine 1404, cysteine 1413, and cysteine 1418. The C4-type zinc-finger motif lies at cysteine 1401–cysteine 1418. The RNA-binding stretch occupies residues glutamate 1445 to isoleucine 1452. An oligomerization region spans residues methionine 1456–glutamine 1461. Residues alanine 1526 to tyrosine 1541 lie within the membrane without spanning it. The Cytoplasmic portion of the chain corresponds to lysine 1542 to phenylalanine 2214. Tyrosine 1551 is subject to O-(5'-phospho-RNA)-tyrosine. The Peptidase C3 domain maps to glycine 1571–phenylalanine 1749. Catalysis depends on for protease 3C activity residues histidine 1610, glutamate 1641, and cysteine 1717. The 116-residue stretch at glutamate 1980–leucine 2095 folds into the RdRp catalytic domain. Mg(2+) contacts are provided by aspartate 1986 and aspartate 2081.

It belongs to the picornaviruses polyprotein family. Interacts with capsid protein VP1 and capsid protein VP3 to form heterotrimeric protomers. As to quaternary structure, interacts with capsid protein VP0, and capsid protein VP3 to form heterotrimeric protomers. Five protomers subsequently associate to form pentamers which serve as building blocks for the capsid. Interacts with capsid protein VP2, capsid protein VP3 and capsid protein VP4 following cleavage of capsid protein VP0. In terms of assembly, interacts with capsid protein VP1 and capsid protein VP3 in the mature capsid. Interacts with capsid protein VP0 and capsid protein VP1 to form heterotrimeric protomers. Five protomers subsequently associate to form pentamers which serve as building blocks for the capsid. Interacts with capsid protein VP4 in the mature capsid. Interacts with protein 2C; this interaction may be important for virion morphogenesis. As to quaternary structure, interacts with capsid protein VP1 and capsid protein VP3. In terms of assembly, homodimer. Homohexamer; forms a hexameric ring structure with 6-fold symmetry characteristic of AAA+ ATPases. Interacts (via N-terminus) with host RTN3 (via reticulon domain); this interaction is important for viral replication. Interacts with capsid protein VP3; this interaction may be important for virion morphogenesis. As to quaternary structure, interacts with protein 3CD. In terms of assembly, homodimer. Interacts with host GBF1. Interacts (via GOLD domain) with host ACBD3 (via GOLD domain); this interaction allows the formation of a viral protein 3A/ACBD3 heterotetramer with a 2:2 stoichiometry, which will stimulate the recruitment of host PI4KB in order to synthesize PI4P at the viral RNA replication sites. Interacts with RNA-directed RNA polymerase. As to quaternary structure, interacts with protein 3AB and with RNA-directed RNA polymerase. In terms of assembly, interacts with Viral protein genome-linked and with protein 3CD. Mg(2+) is required as a cofactor. Post-translationally, specific enzymatic cleavages in vivo by the viral proteases yield processing intermediates and the mature proteins. In terms of processing, myristoylation is required for the formation of pentamers during virus assembly. Further assembly of 12 pentamers and a molecule of genomic RNA generates the provirion. During virion maturation, immature virions are rendered infectious following cleavage of VP0 into VP4 and VP2. This maturation seems to be an autocatalytic event triggered by the presence of RNA in the capsid and it is followed by a conformational change infectious virion. Post-translationally, myristoylation is required during RNA encapsidation and formation of the mature virus particle. In terms of processing, VPg is uridylylated by the polymerase into VPg-pUpU. This acts as a nucleotide-peptide primer for the genomic RNA replication.

The protein localises to the virion. The protein resides in the host cytoplasm. It localises to the host cytoplasmic vesicle membrane. Its subcellular location is the host nucleus. It carries out the reaction a ribonucleoside 5'-triphosphate + H2O = a ribonucleoside 5'-diphosphate + phosphate + H(+). It catalyses the reaction Selective cleavage of Tyr-|-Gly bond in the picornavirus polyprotein.. The enzyme catalyses RNA(n) + a ribonucleoside 5'-triphosphate = RNA(n+1) + diphosphate. The catalysed reaction is Selective cleavage of Gln-|-Gly bond in the poliovirus polyprotein. In other picornavirus reactions Glu may be substituted for Gln, and Ser or Thr for Gly.. Its activity is regulated as follows. Replication or transcription is subject to high level of random mutations by the nucleotide analog ribavirin. Its function is as follows. Forms an icosahedral capsid of pseudo T=3 symmetry with capsid proteins VP2 and VP3. The capsid is 300 Angstroms in diameter, composed of 60 copies of each capsid protein and enclosing the viral positive strand RNA genome. Capsid protein VP1 mainly forms the vertices of the capsid. Capsid protein VP1 interacts with host cell receptor to provide virion attachment to target host cells. This attachment induces virion internalization. Tyrosine kinases are probably involved in the entry process. After binding to its receptor, the capsid undergoes conformational changes. Capsid protein VP1 N-terminus (that contains an amphipathic alpha-helix) and capsid protein VP4 are externalized. Together, they shape a pore in the host membrane through which viral genome is translocated to host cell cytoplasm. Functionally, forms an icosahedral capsid of pseudo T=3 symmetry with capsid proteins VP2 and VP3. The capsid is 300 Angstroms in diameter, composed of 60 copies of each capsid protein and enclosing the viral positive strand RNA genome. Lies on the inner surface of the capsid shell. After binding to the host receptor, the capsid undergoes conformational changes. Capsid protein VP4 is released, Capsid protein VP1 N-terminus is externalized, and together, they shape a pore in the host membrane through which the viral genome is translocated into the host cell cytoplasm. In terms of biological role, component of immature procapsids, which is cleaved into capsid proteins VP4 and VP2 after maturation. Allows the capsid to remain inactive before the maturation step. Its function is as follows. Cysteine protease that cleaves viral polyprotein and specific host proteins. It is responsible for the autocatalytic cleavage between the P1 and P2 regions, which is the first cleavage occurring in the polyprotein. Also cleaves the host translation initiation factor EIF4G1, in order to shut down the capped cellular mRNA translation. Inhibits the host nucleus-cytoplasm protein and RNA trafficking by cleaving host members of the nuclear pores. Counteracts stress granule formation probably by antagonizing its assembly or promoting its dissassembly. Cleaves and inhibits host IFIH1/MDA5, thereby inhibiting the type-I IFN production and the establishment of the antiviral state. Cleaves and inhibits host MAVS, thereby inhibiting the type-I IFN production and the establishment of the antiviral state. Functionally, plays an essential role in the virus replication cycle by acting as a viroporin. Creates a pore in the host endoplasmic reticulum and as a consequence releases Ca2+ in the cytoplasm of infected cell. In turn, high levels of cytoplasmic calcium may trigger membrane trafficking and transport of viral ER-associated proteins to viroplasms, sites of viral genome replication. Induces and associates with structural rearrangements of intracellular membranes. Displays RNA-binding, nucleotide binding and NTPase activities. May play a role in virion morphogenesis and viral RNA encapsidation by interacting with the capsid protein VP3. In terms of biological role, localizes the viral replication complex to the surface of membranous vesicles. Together with protein 3CD binds the Cis-Active RNA Element (CRE) which is involved in RNA synthesis initiation. Acts as a cofactor to stimulate the activity of 3D polymerase, maybe through a nucleid acid chaperone activity. Its function is as follows. Localizes the viral replication complex to the surface of membranous vesicles. It inhibits host cell endoplasmic reticulum-to-Golgi apparatus transport and causes the disassembly of the Golgi complex, possibly through GBF1 interaction. This would result in depletion of MHC, trail receptors and IFN receptors at the host cell surface. Plays an essential role in viral RNA replication by recruiting ACBD3 and PI4KB at the viral replication sites, thereby allowing the formation of the rearranged membranous structures where viral replication takes place. Functionally, acts as a primer for viral RNA replication and remains covalently bound to viral genomic RNA. VPg is uridylylated prior to priming replication into VPg-pUpU. The oriI viral genomic sequence may act as a template for this. The VPg-pUpU is then used as primer on the genomic RNA poly(A) by the RNA-dependent RNA polymerase to replicate the viral genome. During genome replication, the VPg-RNA linkage is removed by the host TDP2, thereby accelerating replication. During the late stage of the replication cycle, host TDP2 is excluded from sites of viral RNA synthesis and encapsidation, allowing for the generation of progeny virions. Involved in the viral replication complex and viral polypeptide maturation. It exhibits protease activity with a specificity and catalytic efficiency that is different from protease 3C. Protein 3CD lacks polymerase activity. Protein 3CD binds to the 5'UTR of the viral genome. In terms of biological role, replicates the viral genomic RNA on the surface of intracellular membranes. May form linear arrays of subunits that propagate along a strong head-to-tail interaction called interface-I. Covalently attaches UMP to a tyrosine of VPg, which is used to prime RNA synthesis. The positive stranded RNA genome is first replicated at virus induced membranous vesicles, creating a dsRNA genomic replication form. This dsRNA is then used as template to synthesize positive stranded RNA genomes. ss(+)RNA genomes are either translated, replicated or encapsidated. Its function is as follows. Major viral protease that mediates proteolytic processing of the polyprotein. Cleaves host EIF5B, contributing to host translation shutoff. Also cleaves host PABPC1, contributing to host translation shutoff. Cleaves host NLRP1, triggers host N-glycine-mediated degradation of the autoinhibitory NLRP1 N-terminal fragment. The chain is Genome polyprotein from Coxsackievirus A24 (strain EH24/70).